Consider the following 340-residue polypeptide: Protein B17 (340 aa).

Belongs to the orthopoxvirus B17 protein family.

The polypeptide is Protein B17 (Variola virus (isolate Human/India/Ind3/1967) (VARV)).